Here is a 946-residue protein sequence, read N- to C-terminus: Histone-lysine N-methyltransferase, H3 lysine-79 specific (946 aa).

A compositionally biased stretch (basic and acidic residues) spans 1 to 18 (MSEADAGARDESPSRTAE). The tract at residues 1–28 (MSEADAGARDESPSRTAEEPAAAMRIKE) is disordered. The region spanning 54–369 (QGKTLRLPGN…KLIKYYEDQR (316 aa)) is the DOT1 domain. S-adenosyl-L-methionine-binding positions include 173 to 176 (YGET), 196 to 205 (FVDLGSGIGQ), Glu-223, and 259 to 260 (DF). Basic and acidic residues predominate over residues 368–409 (QRRRQEVKSSREGSEISDGRDMGLKKRKSQRESSVHPDKLQK). Disordered regions lie at residues 368 to 577 (QRRR…HGGG) and 849 to 905 (PTAS…GATE). Residues 410–422 (TEQAAASSHQSPK) show a composition bias toward polar residues. Residues 464–484 (GKDREKEKEKKKNKIYEEKKV) show a composition bias toward basic and acidic residues. 3 stretches are compositionally biased toward low complexity: residues 491–502 (KSSSSRYSSETP), 512–528 (NSISHSSDVIRPSQPKA), and 855–864 (SKVSPSSSSS). Gly residues predominate over residues 880–903 (GAGGGGKRGTSGGRKSDGGGGGGA).

Belongs to the class I-like SAM-binding methyltransferase superfamily. DOT1 family. In terms of assembly, interacts with zfp-1 (via C-terminus) to form a heterodimer known as the zfp-1-dot-1.1 complex or DotCom complex.

The protein resides in the nucleus. Its subcellular location is the chromosome. It catalyses the reaction L-lysyl(79)-[histone H3] + 3 S-adenosyl-L-methionine = N(6),N(6),N(6)-trimethyl-L-lysyl(79)-[histone H3] + 3 S-adenosyl-L-homocysteine + 3 H(+). In terms of biological role, histone methyltransferase, which in complex with zfp-1, methylates 'Lys-79' of histone H3 to activate transcription. During stress, the zfp-1-dot-1.1 complex also plays a role in the deubiquitination of histone H2B sites, which negatively modulates the RNA polymerase II-induced transcription of highly expressed genes. Involved in controlling tissue-specific gene expression, particularly in the epidermis. This is Histone-lysine N-methyltransferase, H3 lysine-79 specific from Caenorhabditis elegans.